An 802-amino-acid chain; its full sequence is Receptor-type tyrosine-protein phosphatase alpha (802 aa).

A signal peptide spans 1 to 19; sequence MDSWFILVLLGSGLICVSA. Over 20 to 151 the chain is Extracellular; that stretch reads NNATTVAPSV…DSKDRRDETP (132 aa). Asparagine 21 and asparagine 36 each carry an N-linked (GlcNAc...) asparagine glycan. The disordered stretch occupies residues 39–59; that stretch reads TAEPVKEEAKTSNPTSSLTSL. N-linked (GlcNAc...) asparagine glycosylation is found at asparagine 68, asparagine 80, asparagine 86, asparagine 104, and asparagine 124. 2 stretches are compositionally biased toward polar residues: residues 79 to 115 and 123 to 141; these read VNSS…QFTD and GNSS…SGNS. Residues 79-146 form a disordered region; that stretch reads VNSSDSDNGT…PSGNSDSKDR (68 aa). A helical membrane pass occupies residues 152–174; that stretch reads IIAVMVALSSLLVIVFIIIVLYM. Residues 175 to 802 are Cytoplasmic-facing; the sequence is LRFKKYKQAG…DAFSDYANFK (628 aa). Phosphoserine is present on residues serine 211 and serine 213. Tyrosine-protein phosphatase domains lie at 241 to 501 and 533 to 791; these read FREE…LLEH and LEEE…VQEY. Substrate-binding positions include aspartate 410, 442 to 448, and glutamine 486; that span reads CSAGVGR. Cysteine 442 functions as the Phosphocysteine intermediate in the catalytic mechanism. Cysteine 732 functions as the Phosphocysteine intermediate in the catalytic mechanism. Tyrosine 798 carries the post-translational modification Phosphotyrosine.

The protein belongs to the protein-tyrosine phosphatase family. Receptor class 4 subfamily. Part of a complex comprised of PTPRA, BCAR1, BCAR3 (via SH2 domain), and SRC. Within the complex, interacts (when phosphorylated on Tyr-798) with BCAR3 (via SH2 domain). Interacts with GRB2. In terms of processing, integrin binding to extracellular matrix induces phosphorylation at Tyr-798 which induces PTPRA localization and recruitment of BCAR3, BCAR1 and CRK to focal adhesions.

The protein resides in the cell membrane. It localises to the cell junction. Its subcellular location is the focal adhesion. The enzyme catalyses O-phospho-L-tyrosyl-[protein] + H2O = L-tyrosyl-[protein] + phosphate. Functionally, tyrosine protein phosphatase which is involved in integrin-mediated focal adhesion formation. Following integrin engagement, specifically recruits BCAR3, BCAR1 and CRK to focal adhesions thereby promoting SRC-mediated phosphorylation of BRAC1 and the subsequent activation of PAK and small GTPase RAC1 and CDC42. This is Receptor-type tyrosine-protein phosphatase alpha (PTPRA) from Homo sapiens (Human).